The sequence spans 219 residues: Large ribosomal subunit protein uL4 (219 aa).

Residues 45–103 (ARRQGTHATKTRGQVRGGGRKPYRQKGTGRARQGSIRAPQFTGGGTVHGPQPRDYDQRT) are disordered. Over residues 62-73 (GGRKPYRQKGTG) the composition is skewed to basic residues.

It belongs to the universal ribosomal protein uL4 family. As to quaternary structure, part of the 50S ribosomal subunit.

Its function is as follows. One of the primary rRNA binding proteins, this protein initially binds near the 5'-end of the 23S rRNA. It is important during the early stages of 50S assembly. It makes multiple contacts with different domains of the 23S rRNA in the assembled 50S subunit and ribosome. Functionally, forms part of the polypeptide exit tunnel. This is Large ribosomal subunit protein uL4 from Corynebacterium kroppenstedtii (strain DSM 44385 / JCM 11950 / CIP 105744 / CCUG 35717).